Here is a 534-residue protein sequence, read N- to C-terminus: Probable alanine aminotransferase, mitochondrial (534 aa).

A mitochondrion-targeting transit peptide spans 1 to 18; sequence MFKRSLKVLLSNPPINRV. Lys352 carries the N6-(pyridoxal phosphate)lysine modification.

The protein belongs to the class-I pyridoxal-phosphate-dependent aminotransferase family. Alanine aminotransferase subfamily. Homodimer. The cofactor is pyridoxal 5'-phosphate.

The protein resides in the mitochondrion matrix. The enzyme catalyses L-alanine + 2-oxoglutarate = pyruvate + L-glutamate. The protein operates within amino-acid degradation; L-alanine degradation via transaminase pathway; pyruvate from L-alanine: step 1/1. The protein is Probable alanine aminotransferase, mitochondrial (gpt) of Dictyostelium discoideum (Social amoeba).